Here is a 612-residue protein sequence, read N- to C-terminus: MPAYRSRTTTHGRNMAGARGLWRATGMKDSDFGKPIIAVVNSFTQFVPGHVHLKDLGQLVAREIEAAGGVAKEFNTIAVDDGIAMGHDGMLYSLPSRELIADSVEYMVNAHCADAMVCISNCDKITPGMLMASLRLNIPTVFVSGGPMEAGKVVLHGKTHALDLVDAMVAAADDKISDEDVKVIERSACPTCGSCSGMFTANSMNCLTEALGLSLPGNGSTLATHADRKRLFVEAGHLIVDLARRYYEQDDVKALPRTIASKQAFENAMALDIAMGGSTNTVLHILAAAHEGEVDFTMADIDALSRRVPCLSKVAPAKSDVHMEDVHRAGGIMSILGELDKGGLLNRDCPTVHAETLGDAIDRWDITRTNSDTVRNFYRAAPGGIPTQVAFSQEARWDDLDTDRQNGVIRSVEHPFSKDGGLAVLKGNLAIDGCIVKTAGVDESILKFSGPARVFESQDGSVKAILANEVKAGDVVVIRYEGPKGGPGMQEMLYPTSYLKSKGLGKACALITDGRFSGGTSGLSIGHVSPEAANGGTIGLVREGDMIDIDIPNRTISLRVSEAELADRRAEQDGKGWHPTEVRKRNVTTALKAYAAFATSADRGAVRDLNAR.

A Mg(2+)-binding site is contributed by Asp-81. A [2Fe-2S] cluster-binding site is contributed by Cys-122. Residues Asp-123 and Lys-124 each contribute to the Mg(2+) site. At Lys-124 the chain carries N6-carboxylysine. Residue Cys-195 coordinates [2Fe-2S] cluster. Glu-491 lines the Mg(2+) pocket. The Proton acceptor role is filled by Ser-517.

It belongs to the IlvD/Edd family. Homodimer. Requires [2Fe-2S] cluster as cofactor. It depends on Mg(2+) as a cofactor.

The catalysed reaction is (2R)-2,3-dihydroxy-3-methylbutanoate = 3-methyl-2-oxobutanoate + H2O. It carries out the reaction (2R,3R)-2,3-dihydroxy-3-methylpentanoate = (S)-3-methyl-2-oxopentanoate + H2O. It participates in amino-acid biosynthesis; L-isoleucine biosynthesis; L-isoleucine from 2-oxobutanoate: step 3/4. The protein operates within amino-acid biosynthesis; L-valine biosynthesis; L-valine from pyruvate: step 3/4. Functionally, functions in the biosynthesis of branched-chain amino acids. Catalyzes the dehydration of (2R,3R)-2,3-dihydroxy-3-methylpentanoate (2,3-dihydroxy-3-methylvalerate) into 2-oxo-3-methylpentanoate (2-oxo-3-methylvalerate) and of (2R)-2,3-dihydroxy-3-methylbutanoate (2,3-dihydroxyisovalerate) into 2-oxo-3-methylbutanoate (2-oxoisovalerate), the penultimate precursor to L-isoleucine and L-valine, respectively. This Rhizobium etli (strain CIAT 652) protein is Dihydroxy-acid dehydratase.